A 762-amino-acid chain; its full sequence is Proline-rich receptor-like protein kinase PERK10 (762 aa).

Residues 1–322 (MTTPAQAPRE…PTPVTDNSSS (322 aa)) are disordered. Over 1 to 328 (MTTPAQAPRE…NSSSSGISIA (328 aa)) the chain is Extracellular. Low complexity predominate over residues 13–23 (SLSPSLASPPL). Asparagine 37 is a glycosylation site (N-linked (GlcNAc...) asparagine). The segment covering 41–57 (PTREPTNGNPPETTNTP) has biased composition (low complexity). 3 stretches are compositionally biased toward pro residues: residues 60 to 210 (SSPP…PSTP), 231 to 246 (PPPPGSKRPTPSPPSP), and 254 to 275 (HPSPPSPPEETLPPPKPSPDPL). Residues 276 to 305 (PSNSSSPPTLLPPSSVVSPPSPPRKSVSGP) are compositionally biased toward low complexity. Residues asparagine 278 and asparagine 319 are each glycosylated (N-linked (GlcNAc...) asparagine). The helical transmembrane segment at 329 to 349 (AVVGVSIGVALVLLTLIGVVV) threads the bilayer. The Cytoplasmic segment spans residues 350–762 (CCLKKRKKRL…NSYISKDENL (413 aa)). The disordered stretch occupies residues 370 to 410 (TPMESSSPRSDSALLKTQSSAPLVGNRSSNRTYLSQSEPGG). Over residues 372–407 (MESSSPRSDSALLKTQSSAPLVGNRSSNRTYLSQSE) the composition is skewed to polar residues. The Protein kinase domain occupies 430–706 (FSDENLLGEG…SQIVRAFDSL (277 aa)). ATP-binding positions include 436–444 (LGEGGFGRV) and lysine 458. The Proton acceptor role is filled by aspartate 554.

It belongs to the protein kinase superfamily. Ser/Thr protein kinase family. As to quaternary structure, interacts with KIPK1 and KIPK2 (via its cytosolic domain). Mostly expressed in inflorescence bolts and flower buds, and, to a lower extent, in roots, seedlings, leaves and siliques.

It is found in the cell membrane. The catalysed reaction is L-seryl-[protein] + ATP = O-phospho-L-seryl-[protein] + ADP + H(+). It catalyses the reaction L-threonyl-[protein] + ATP = O-phospho-L-threonyl-[protein] + ADP + H(+). Could be involved in the negative regulation of root growth. The chain is Proline-rich receptor-like protein kinase PERK10 (PERK10) from Arabidopsis thaliana (Mouse-ear cress).